A 163-amino-acid polypeptide reads, in one-letter code: ATP synthase subunit b (163 aa).

A helical transmembrane segment spans residues 13-33; sequence SFILFVWFCMKYIWPPIIFAI.

The protein belongs to the ATPase B chain family. In terms of assembly, F-type ATPases have 2 components, F(1) - the catalytic core - and F(0) - the membrane proton channel. F(1) has five subunits: alpha(3), beta(3), gamma(1), delta(1), epsilon(1). F(0) has three main subunits: a(1), b(2) and c(10-14). The alpha and beta chains form an alternating ring which encloses part of the gamma chain. F(1) is attached to F(0) by a central stalk formed by the gamma and epsilon chains, while a peripheral stalk is formed by the delta and b chains.

The protein resides in the cell membrane. In terms of biological role, f(1)F(0) ATP synthase produces ATP from ADP in the presence of a proton or sodium gradient. F-type ATPases consist of two structural domains, F(1) containing the extramembraneous catalytic core and F(0) containing the membrane proton channel, linked together by a central stalk and a peripheral stalk. During catalysis, ATP synthesis in the catalytic domain of F(1) is coupled via a rotary mechanism of the central stalk subunits to proton translocation. Its function is as follows. Component of the F(0) channel, it forms part of the peripheral stalk, linking F(1) to F(0). This is ATP synthase subunit b from Buchnera aphidicola subsp. Schizaphis graminum (strain Sg).